The following is a 141-amino-acid chain: Large-conductance mechanosensitive channel (141 aa).

Helical transmembrane passes span Val-16 to Met-36 and Gly-83 to Val-103.

It belongs to the MscL family. Homopentamer.

The protein localises to the cell inner membrane. Its function is as follows. Channel that opens in response to stretch forces in the membrane lipid bilayer. May participate in the regulation of osmotic pressure changes within the cell. This chain is Large-conductance mechanosensitive channel, found in Cytophaga hutchinsonii (strain ATCC 33406 / DSM 1761 / CIP 103989 / NBRC 15051 / NCIMB 9469 / D465).